The primary structure comprises 103 residues: Histone H4 type VIII (103 aa).

The span at 1–14 (MSGRGKGGKGLGKG) shows a compositional bias: gly residues. The tract at residues 1-20 (MSGRGKGGKGLGKGGAKRHR) is disordered. The residue at position 2 (Ser2) is an N-acetylserine. Position 2 is a phosphoserine (Ser2). Arg4 carries the post-translational modification Asymmetric dimethylarginine; by PRMT1; alternate. At Arg4 the chain carries Citrulline; alternate. Omega-N-methylarginine; by PRMT1; alternate is present on Arg4. Position 4 is a symmetric dimethylarginine; by PRMT5 and PRMT7; alternate (Arg4). 4 positions are modified to N6-(2-hydroxyisobutyryl)lysine; alternate: Lys6, Lys9, Lys13, and Lys17. The residue at position 6 (Lys6) is an N6-acetyl-N6-methyllysine; alternate. N6-acetyllysine occurs at positions 6, 9, 13, and 17. N6-butyryllysine; alternate occurs at positions 6, 9, 13, and 17. Lys6 is subject to N6-glutaryllysine; alternate. Residues Lys6, Lys9, Lys13, and Lys17 each carry the N6-lactoyllysine; alternate modification. Lys9 bears the N6-propionyllysine; alternate mark. Lys13 is subject to N6-acetyl-N6-methyllysine; alternate. Position 13 is an N6-glutaryllysine; alternate (Lys13). Lys13 carries the N6-methyllysine; alternate modification. At Lys17 the chain carries N6-propionyllysine; alternate. An N6-methyllysine; alternate modification is found at Lys21. Residue Lys21 is modified to N6,N6,N6-trimethyllysine; alternate. Lys21 carries the post-translational modification N6,N6-dimethyllysine; alternate. An N6-(2-hydroxyisobutyryl)lysine; alternate mark is found at Lys32 and Lys45. Lys32 is modified (N6-acetyllysine). Residues Lys32 and Lys45 each carry the N6-butyryllysine; alternate modification. At Lys32 the chain carries N6-glutaryllysine; alternate. N6-lactoyllysine; alternate is present on Lys32. 2 positions are modified to N6-propionyllysine; alternate: Lys32 and Lys45. At Lys32 the chain carries N6-succinyllysine; alternate. Residue Lys32 forms a Glycyl lysine isopeptide (Lys-Gly) (interchain with G-Cter in UFM1); alternate linkage. Ser48 carries the post-translational modification Phosphoserine. A Phosphotyrosine modification is found at Tyr52. Position 60 is an N6-acetyllysine (Lys60). Residues Lys60, Lys78, and Lys80 each carry the N6-glutaryllysine; alternate modification. Residue Lys60 is modified to N6-(2-hydroxyisobutyryl)lysine. N6-(2-hydroxyisobutyryl)lysine; alternate is present on residues Lys78 and Lys80. N6-butyryllysine; alternate is present on residues Lys78 and Lys80. Lys78 is modified (N6-lactoyllysine; alternate). Lys78 and Lys80 each carry N6-propionyllysine; alternate. At Lys78 the chain carries N6-succinyllysine. Position 80 is an N6-acetyllysine (Lys80). Tyr89 carries the post-translational modification Phosphotyrosine. Lys92 is subject to N6-(2-hydroxyisobutyryl)lysine; alternate. Position 92 is an N6-butyryllysine; alternate (Lys92). N6-glutaryllysine; alternate is present on Lys92. Lys92 bears the N6-lactoyllysine; alternate mark. N6-propionyllysine; alternate is present on Lys92. Lys92 carries the N6-succinyllysine; alternate modification. Residue Lys92 is modified to N6-acetyllysine; alternate. Lys92 is covalently cross-linked (Glycyl lysine isopeptide (Lys-Gly) (interchain with G-Cter in ubiquitin); alternate).

The protein belongs to the histone H4 family. As to quaternary structure, the nucleosome is a histone octamer containing two molecules each of H2A, H2B, H3 and H4 assembled in one H3-H4 heterotetramer and two H2A-H2B heterodimers. The octamer wraps approximately 147 bp of DNA. In terms of processing, acetylation at Lys-6 (H4K5ac), Lys-9 (H4K8ac), Lys-13 (H4K12ac) and Lys-17 (H4K16ac) occurs in coding regions of the genome but not in heterochromatin. Post-translationally, citrullination at Arg-4 (H4R3ci) by PADI4 impairs methylation. Monomethylation and asymmetric dimethylation at Arg-4 (H4R3me1 and H4R3me2a, respectively) by PRMT1 favors acetylation at Lys-9 (H4K8ac) and Lys-13 (H4K12ac). Demethylation is performed by JMJD6. Symmetric dimethylation on Arg-4 (H4R3me2s) by the PRDM1/PRMT5 complex may play a crucial role in the germ-cell lineage. In terms of processing, monomethylated, dimethylated or trimethylated at Lys-21 (H4K20me1, H4K20me2, H4K20me3). Monomethylation is performed by KMT5A/SET8. Trimethylation is performed by KMT5B and KMT5C and induces gene silencing. Monomethylated at Lys-13 (H4K12me1) by N6AMT1; H4K12me1 modification is present at the promoters of numerous genes encoding cell cycle regulators. Post-translationally, acetyl-methylated at Lys-6 and Lys-13 (H4K5acme and H4K12acme, respectively), acetyl-methylation is an epigenetic mark of active chromatin associated with increased transcriptional initiation. Acetyl-methylation is formed by acetylation by EP300/p300 of lysine residues that are already monomethylated on the same side chain. H4K5acme and H4K12acme marks specifically bind BRD2. Ubiquitinated by the CUL4-DDB-RBX1 complex in response to ultraviolet irradiation. This may weaken the interaction between histones and DNA and facilitate DNA accessibility to repair proteins. Monoubiquitinated at Lys-92 of histone H4 (H4K91ub1) in response to DNA damage. The exact role of H4K91ub1 in DNA damage response is still unclear but it may function as a licensing signal for additional histone H4 post-translational modifications such as H4 Lys-21 methylation (H4K20me). In terms of processing, sumoylated, which is associated with transcriptional repression. Post-translationally, butyrylation of histones marks active promoters and competes with histone acetylation. Glutarylation at Lys-92 (H4K91glu) destabilizes nucleosomes by promoting dissociation of the H2A-H2B dimers from nucleosomes. In terms of processing, ufmylated; monofmylated by UFL1 at Lys-32 (H4K31Ufm1) in response to DNA damage. Post-translationally, lactylated in macrophages by EP300/P300 by using lactoyl-CoA directly derived from endogenous or exogenous lactate, leading to stimulates gene transcription. Delactylated by SIRT3 at Lys-17 (H4K16la).

It localises to the nucleus. The protein resides in the chromosome. Functionally, core component of nucleosome. Nucleosomes wrap and compact DNA into chromatin, limiting DNA accessibility to the cellular machineries which require DNA as a template. Histones thereby play a central role in transcription regulation, DNA repair, DNA replication and chromosomal stability. DNA accessibility is regulated via a complex set of post-translational modifications of histones, also called histone code, and nucleosome remodeling. This Gallus gallus (Chicken) protein is Histone H4 type VIII (H4-VIII).